Here is a 183-residue protein sequence, read N- to C-terminus: MASSSPRRQELLKQLGLEFESYAPEIDESVQYNETVEAYVERLAREKANTILQQFPQSIIIAADTSLSIDGKIIGKPESKQHAFDIWSTLSGRRHDVFSGICVAASNAIHSCVVKTSVEFQTLSMADMELYWATGEPLGKAGAYAIQGIAAQFIPRIEGSYTNVVGLPLFETIQLLKRVKAFN.

The active-site Proton acceptor is Asp64.

This sequence belongs to the Maf family. YhdE subfamily. The cofactor is a divalent metal cation.

It localises to the cytoplasm. The enzyme catalyses dTTP + H2O = dTMP + diphosphate + H(+). The catalysed reaction is UTP + H2O = UMP + diphosphate + H(+). In terms of biological role, nucleoside triphosphate pyrophosphatase that hydrolyzes dTTP and UTP. May have a dual role in cell division arrest and in preventing the incorporation of modified nucleotides into cellular nucleic acids. In Acinetobacter baylyi (strain ATCC 33305 / BD413 / ADP1), this protein is dTTP/UTP pyrophosphatase.